The sequence spans 241 residues: Carboxy-S-adenosyl-L-methionine synthase (241 aa).

S-adenosyl-L-methionine-binding positions include Y38, 63 to 65 (GCS), 88 to 89 (DN), 116 to 117 (DI), N131, and R198.

It belongs to the class I-like SAM-binding methyltransferase superfamily. Cx-SAM synthase family. Homodimer.

The catalysed reaction is prephenate + S-adenosyl-L-methionine = carboxy-S-adenosyl-L-methionine + 3-phenylpyruvate + H2O. In terms of biological role, catalyzes the conversion of S-adenosyl-L-methionine (SAM) to carboxy-S-adenosyl-L-methionine (Cx-SAM). The sequence is that of Carboxy-S-adenosyl-L-methionine synthase from Histophilus somni (strain 129Pt) (Haemophilus somnus).